Here is a 460-residue protein sequence, read N- to C-terminus: ERAD-associated E3 ubiquitin-protein ligase HRD1B (460 aa).

The Cytoplasmic segment spans residues Met1–Gln3. The chain crosses the membrane as a helical span at residues Leu4–Ser24. Residues Ser25–Lys40 are Lumenal-facing. A helical transmembrane segment spans residues Ile41 to Val61. Topologically, residues Lys62–Asp98 are cytoplasmic. The helical transmembrane segment at Phe99–Met119 threads the bilayer. The Lumenal segment spans residues Ala120–Arg140. Residues Ile141 to Gln161 traverse the membrane as a helical segment. At Gln162 to Ser170 the chain is on the cytoplasmic side. Residues Met171–Val191 form a helical membrane-spanning segment. At Lys192–Leu225 the chain is on the lumenal side. The chain crosses the membrane as a helical span at residues Ser226–Ile246. Over Arg247–Ala460 the chain is Cytoplasmic. The segment at Cys292–Arg330 adopts an RING-type; atypical zinc-finger fold. The segment at Ala339–Met378 is disordered. Residues Ser353–Ser375 show a composition bias toward low complexity.

This sequence belongs to the HRD1 family.

Its subcellular location is the endoplasmic reticulum membrane. It catalyses the reaction S-ubiquitinyl-[E2 ubiquitin-conjugating enzyme]-L-cysteine + [acceptor protein]-L-lysine = [E2 ubiquitin-conjugating enzyme]-L-cysteine + N(6)-ubiquitinyl-[acceptor protein]-L-lysine.. Its pathway is protein modification; protein ubiquitination. Its function is as follows. Probable component of the HRD1 ubiquitin ligase complex that mediates the rapid degradation of misfolded endoplasmic reticulum (ER) proteins, a process called ER-associated degradation (ERAD). Targets the misfolded LRR receptor kinase BRI1. Functions redundantly with HRD3A. This is ERAD-associated E3 ubiquitin-protein ligase HRD1B from Arabidopsis thaliana (Mouse-ear cress).